The sequence spans 330 residues: Putative aminohydrolase AF_1775 (330 aa).

Positions 54, 56, 181, and 253 each coordinate Zn(2+).

Belongs to the metallo-dependent hydrolases superfamily. ATZ/TRZ family.

The sequence is that of Putative aminohydrolase AF_1775 from Archaeoglobus fulgidus (strain ATCC 49558 / DSM 4304 / JCM 9628 / NBRC 100126 / VC-16).